The primary structure comprises 237 residues: Bax inhibitor 1 (237 aa).

Over 1 to 29 (MNIFDRKINFDALLKFSHITPSTQQHLKK) the chain is Cytoplasmic. A Glycyl lysine isopeptide (Lys-Gly) (interchain with G-Cter in ubiquitin) cross-link involves residue Lys7. The chain crosses the membrane as a helical span at residues 30 to 50 (VYASFALCMFVAAAGAYVHMV). Topologically, residues 51–52 (TH) are lumenal. A helical transmembrane segment spans residues 53-73 (FIQAGLLSALGSLILMIWLMA). The Cytoplasmic segment spans residues 74-86 (TPHSHETEQKRLG). A helical transmembrane segment spans residues 87–107 (LLAGFAFLTGVGLGPALEFCI). At 108-112 (AVNPS) the chain is on the lumenal side. The helical transmembrane segment at 113-133 (ILPTAFMGTAMIFTCFTLSAL) threads the bilayer. The Cytoplasmic segment spans residues 134–139 (YARRRS). Residues 140–160 (YLFLGGILMSALSLLLLSSLG) form a helical membrane-spanning segment. The Lumenal segment spans residues 161–166 (NVFFGS). A helical membrane pass occupies residues 167–187 (IWLFQANLYVGLVVMCGFVLF). The Cytoplasmic segment spans residues 188–206 (DTQLIIEKAEHGDQDYIWH). An intramembrane region (helical) is located at residues 207 to 227 (CIDLFLDFITVFRKLMMILAM). Residues 228-237 (NEKDKKKEKK) are Cytoplasmic-facing.

Belongs to the BI1 family. In terms of assembly, interacts with BCL2 and BCL2L1. Interacts with ERN1. Ubiquitinated by BFAR, leading to proteasomal degradation. Highly abundant in testis.

It is found in the endoplasmic reticulum membrane. Functionally, endoplasmic reticulum (ER)-resident protein that confers cellular protection as an anti-apoptotic protein by limiting multiple stress-inducing pathways surrounding the endoplasmic reticulum and mitochondria. Inhibits the activities of the key sensor for the endoplasmic reticulum unfolded protein response IRE1alpha/ERN1 both directly and by blocking BAX/BAK binding. Modulates ER calcium homeostasis by acting as a calcium-leak channel. Negatively regulates autophagy and autophagosome formation, especially during periods of nutrient deprivation, and reduces cell survival during starvation. This Homo sapiens (Human) protein is Bax inhibitor 1 (TMBIM6).